We begin with the raw amino-acid sequence, 736 residues long: Gingipain R2 (736 aa).

An N-terminal signal peptide occupies residues 1 to 24 (MKKNFSRIVSIVAFSSLLGGMAFA). The propeptide occupies 25-229 (QPAERGRNPQ…SVFMNYEATR (205 aa)). The Ca(2+) site is built by D307, V329, D332, Y334, E336, E390, and H395. The active-site Proton donor is H440. Catalysis depends on C473, which acts as the Nucleophile. 8 residues coordinate Ca(2+): F478, E487, D521, E522, E525, H531, D613, and E639.

Belongs to the peptidase C25 family.

Its subcellular location is the secreted. It catalyses the reaction Hydrolysis of proteins and small molecule substrates, with a preference for Arg in P1.. Its activity is regulated as follows. Inhibited by human histatin-3 1/24 (histatin-5). Its function is as follows. Thiol protease. Acts synergistically with RgpA to catalyze the maturation of fimbrial subunits, such as FimA. Its proteolytic activity is a major factor in both periodontal tissue destruction and in evasion of host defense mechanisms. The sequence is that of Gingipain R2 (rgpB) from Porphyromonas gingivalis (strain ATCC BAA-308 / W83).